We begin with the raw amino-acid sequence, 335 residues long: Tetraacyldisaccharide 4'-kinase (335 aa).

Residue 58–65 participates in ATP binding; that stretch reads TMGGAGKT.

This sequence belongs to the LpxK family.

It catalyses the reaction a lipid A disaccharide + ATP = a lipid IVA + ADP + H(+). The protein operates within glycolipid biosynthesis; lipid IV(A) biosynthesis; lipid IV(A) from (3R)-3-hydroxytetradecanoyl-[acyl-carrier-protein] and UDP-N-acetyl-alpha-D-glucosamine: step 6/6. Functionally, transfers the gamma-phosphate of ATP to the 4'-position of a tetraacyldisaccharide 1-phosphate intermediate (termed DS-1-P) to form tetraacyldisaccharide 1,4'-bis-phosphate (lipid IVA). The polypeptide is Tetraacyldisaccharide 4'-kinase (Caulobacter vibrioides (strain ATCC 19089 / CIP 103742 / CB 15) (Caulobacter crescentus)).